A 668-amino-acid chain; its full sequence is Kelch repeat-containing protein ARB_01230 (668 aa).

Residues 1–32 (MEVGRFASKSASMTYLLLVLLVGFILPQQGQH) form the signal peptide. Residues 33-522 (AHARTLARRD…GSGSDGPNIA (490 aa)) are Extracellular-facing. N-linked (GlcNAc...) asparagine glycosylation is present at asparagine 60. Kelch repeat units follow at residues 62 to 108 (TLYI…PRGD) and 125 to 176 (SLFL…ANIP). N-linked (GlcNAc...) asparagine glycans are attached at residues asparagine 251 and asparagine 291. Kelch repeat units lie at residues 283–331 (ILGL…AVAA), 340–395 (QVYL…IWNS), 396–445 (QIVV…ASQT), and 463–509 (VQSV…GPHA). The helical transmembrane segment at 523-543 (AIVAGVIAGCLGVLAIYLGFV) threads the bilayer. At 544-668 (TWLYRRRLAI…PRQTLRVINQ (125 aa)) the chain is on the cytoplasmic side. Positions 611-642 (DNQRHNHTRSSSGGNFDHLAQPERPSTSSSVE) are disordered.

It is found in the membrane. The protein localises to the secreted. This Arthroderma benhamiae (strain ATCC MYA-4681 / CBS 112371) (Trichophyton mentagrophytes) protein is Kelch repeat-containing protein ARB_01230.